The primary structure comprises 156 residues: SsrA-binding protein (156 aa).

It belongs to the SmpB family.

Its subcellular location is the cytoplasm. Its function is as follows. Required for rescue of stalled ribosomes mediated by trans-translation. Binds to transfer-messenger RNA (tmRNA), required for stable association of tmRNA with ribosomes. tmRNA and SmpB together mimic tRNA shape, replacing the anticodon stem-loop with SmpB. tmRNA is encoded by the ssrA gene; the 2 termini fold to resemble tRNA(Ala) and it encodes a 'tag peptide', a short internal open reading frame. During trans-translation Ala-aminoacylated tmRNA acts like a tRNA, entering the A-site of stalled ribosomes, displacing the stalled mRNA. The ribosome then switches to translate the ORF on the tmRNA; the nascent peptide is terminated with the 'tag peptide' encoded by the tmRNA and targeted for degradation. The ribosome is freed to recommence translation, which seems to be the essential function of trans-translation. The polypeptide is SsrA-binding protein (Staphylococcus carnosus (strain TM300)).